Here is a 218-residue protein sequence, read N- to C-terminus: Pyridoxine/pyridoxamine 5'-phosphate oxidase (218 aa).

Substrate contacts are provided by residues 14-17 and lysine 72; that span reads RREY. FMN-binding positions include 67–72, 82–83, arginine 88, lysine 89, and glutamine 111; these read RIVLLK and YT. Substrate contacts are provided by tyrosine 129, arginine 133, and serine 137. Residues 146-147 and tryptophan 191 each bind FMN; that span reads QS. 197–199 is a binding site for substrate; that stretch reads RLH. FMN is bound at residue arginine 201.

The protein belongs to the pyridoxamine 5'-phosphate oxidase family. In terms of assembly, homodimer. FMN is required as a cofactor.

It carries out the reaction pyridoxamine 5'-phosphate + O2 + H2O = pyridoxal 5'-phosphate + H2O2 + NH4(+). The catalysed reaction is pyridoxine 5'-phosphate + O2 = pyridoxal 5'-phosphate + H2O2. It functions in the pathway cofactor metabolism; pyridoxal 5'-phosphate salvage; pyridoxal 5'-phosphate from pyridoxamine 5'-phosphate: step 1/1. The protein operates within cofactor metabolism; pyridoxal 5'-phosphate salvage; pyridoxal 5'-phosphate from pyridoxine 5'-phosphate: step 1/1. In terms of biological role, catalyzes the oxidation of either pyridoxine 5'-phosphate (PNP) or pyridoxamine 5'-phosphate (PMP) into pyridoxal 5'-phosphate (PLP). The protein is Pyridoxine/pyridoxamine 5'-phosphate oxidase of Escherichia coli (strain 55989 / EAEC).